We begin with the raw amino-acid sequence, 421 residues long: RNA exonuclease 4 (421 aa).

Disordered regions lie at residues 1 to 51 (MAKA…ETKK) and 79 to 179 (ENQA…QPPK). Residues 11–24 (SPCSGSLGKTANTP) show a composition bias toward polar residues. Over residues 25-36 (KQKRKQKQRKFW) the composition is skewed to basic residues. 3 stretches are compositionally biased toward basic and acidic residues: residues 92 to 107 (PKKD…EESV), 140 to 149 (AAEKSDEVSK), and 161 to 170 (DTEHQGKKPQ). Residues 234 to 385 (TVAMDCEMVG…QDAQAAMRLY (152 aa)) form the Exonuclease domain.

It belongs to the REXO4 family.

It is found in the nucleus. The protein is RNA exonuclease 4 (rexo4) of Xenopus laevis (African clawed frog).